A 356-amino-acid polypeptide reads, in one-letter code: Uroporphyrinogen decarboxylase (356 aa).

Residues 25-29, Asp75, Tyr152, Thr207, and His326 contribute to the substrate site; that span reads RQAGR.

The protein belongs to the uroporphyrinogen decarboxylase family. As to quaternary structure, homodimer.

Its subcellular location is the cytoplasm. The enzyme catalyses uroporphyrinogen III + 4 H(+) = coproporphyrinogen III + 4 CO2. It participates in porphyrin-containing compound metabolism; protoporphyrin-IX biosynthesis; coproporphyrinogen-III from 5-aminolevulinate: step 4/4. Functionally, catalyzes the decarboxylation of four acetate groups of uroporphyrinogen-III to yield coproporphyrinogen-III. The chain is Uroporphyrinogen decarboxylase from Magnetococcus marinus (strain ATCC BAA-1437 / JCM 17883 / MC-1).